A 252-amino-acid polypeptide reads, in one-letter code: MDSAAAERPSSYAVNFPPLLPAPAPAVAGAMGVANHKSVLCMKWREGRCHNGVACRYAHGEEDQRIVPEMRVGGGGTSMHARSSPPRDGASSGSTASIAMAACRIEEQRHGRGGESFILPRSRRKRQALGSGSARSTAPTPPRAHTTPPCSRSVAAPRASTSPLRPSPVPPPATLHSAADVQRSVARALEDFEQRESSSSVFPLAIDIVAEDAMTATSEPSATSDDDAITTTTSSSTTDADELDAAVAAPPK.

The C3H1-type zinc-finger motif lies at 35–62 (NHKSVLCMKWREGRCHNGVACRYAHGEE). 3 disordered regions span residues 71 to 95 (RVGG…SGST), 109 to 180 (RHGR…SAAD), and 215 to 252 (TATS…APPK). Low complexity-rich tracts occupy residues 133-149 (SARS…TTPP) and 229-238 (ITTTTSSSTT).

The chain is Putative zinc finger CCCH domain-containing protein 58 from Oryza sativa subsp. japonica (Rice).